Reading from the N-terminus, the 851-residue chain is B-box type zinc finger protein ncl-1 (851 aa).

Positions 71-91 (GFGFGSPSSTTSSSPPLSNSP) are disordered. The segment covering 76-91 (SPSSTTSSSPPLSNSP) has biased composition (low complexity). The segment at 127-174 (VPAVHCSGCKSNETATSFCQDCNANLCDNCTMAHKFMHCFADHRVVSL) adopts a B box-type 1; atypical zinc-finger fold. Positions 132, 135, 156, and 160 each coordinate Zn(2+). Residues 176–197 (TPGTGSSSSSTSSSSSASSTSS) show a composition bias toward low complexity. Residues 176-211 (TPGTGSSSSSTSSSSSASSTSSHQVPSLGGKQSPDS) are disordered. The B box-type 2 zinc finger occupies 218-261 (KRSVLCLQHRASELVFFCVSCNLAICRDCTVSDHPSGTHQYELI). Positions 223, 226, 246, and 251 each coordinate Zn(2+). A coiled-coil region spans residues 303–331 (SLHNAHAQLEETVSNLINVIQDQKKTLAK). NHL repeat units lie at residues 573–616 (HCKF…FDKE), 620–665 (KFQF…YNQY), 666–707 (GQFL…FDMF), 708–750 (GNIL…FSYE), and 751–794 (GQYL…FSQD).

In terms of tissue distribution, present in cells in which nucleoli are absent, and absent from large cells in which nucleoli are prominent. Highly expressed in the gonads.

The protein localises to the cytoplasm. Its function is as follows. Translational repressor that inhibits protein synthesis. Represses the translation of mRNAs such as fib-1, probably by being recruited by RNA-binding protein nos-2 and the Pumilio proteins puf-5, puf-8 and puf-9 to the consensus core PUF binding motif in the 3'-UTR of fib-1 mRNA. Negatively regulates ribosomal RNA (rRNA) synthesis, ribosomal protein synthesis and nucleolus size. Its role in the negative regulation of nucleolus size is most likely through its negative regulation of the translation of proteins such as the rRNA 2'-O-methyltransferase fib-1, and dao-5. Might act directly as a transcription factor to inhibit RNA polymerase I (rRNA) and III (5S RNA) transcription. Plays a role in embryonic development, and in particular, is involved in regulating the localization of proteins, such as par-2, that are required for embryonic cell polarity. Plays a role in the regulation of lifespan, and the response to nutrient availability. In Caenorhabditis elegans, this protein is B-box type zinc finger protein ncl-1.